Consider the following 964-residue polypeptide: Siderophore exporter MmpL5 (964 aa).

Helical transmembrane passes span 31–51 (FAVPIILGWLVTIAVLNVTVP), 203–223 (SLQVIEAVTFTVIIVMLLLVY), 230–250 (AIMLTMVVLGLLATRGGVAFL), 255–275 (IIGLSTFATNLLVVLAIAAAT), 302–322 (MFGGTAHVVLGSGLTIAGATF), 340–360 (AIGMVIVVAAALTLGPAIIAV), 389–409 (WPGPILVGAVALALVGLLTLP), 773–793 (TYDLMIAGISALCLIFIIMLI), 803–823 (VIVGTVVLSLGASFGLSVLIW), 826–846 (ILGIELHWLVLAMAVIILLAV), 880–900 (VVTAAGLVFAFTMMSFAVSEL), and 923–943 (SFMTPSIAALLGKWFWWPQVV).

Belongs to the resistance-nodulation-cell division (RND) (TC 2.A.6) family. MmpL subfamily. As to quaternary structure, interacts with MmpS5.

It is found in the cell inner membrane. In terms of biological role, part of an export system, which is required for biosynthesis and secretion of siderophores. The protein is Siderophore exporter MmpL5 (mmpL5) of Mycobacterium tuberculosis (strain CDC 1551 / Oshkosh).